We begin with the raw amino-acid sequence, 77 residues long: Sec-independent protein translocase protein TatA (77 aa).

A helical membrane pass occupies residues 1-21 (MGSFSIWHWLIVLVIVMLVFG). The segment at 46–77 (GEGKAAADPAQSKELRDSTTIDVEAKEKTRQQ) is disordered.

The protein belongs to the TatA/E family. As to quaternary structure, the Tat system comprises two distinct complexes: a TatABC complex, containing multiple copies of TatA, TatB and TatC subunits, and a separate TatA complex, containing only TatA subunits. Substrates initially bind to the TatABC complex, which probably triggers association of the separate TatA complex to form the active translocon.

It is found in the cell inner membrane. Functionally, part of the twin-arginine translocation (Tat) system that transports large folded proteins containing a characteristic twin-arginine motif in their signal peptide across membranes. TatA could form the protein-conducting channel of the Tat system. This is Sec-independent protein translocase protein TatA from Cupriavidus necator (strain ATCC 17699 / DSM 428 / KCTC 22496 / NCIMB 10442 / H16 / Stanier 337) (Ralstonia eutropha).